Consider the following 343-residue polypeptide: 3-dehydroquinate synthase (343 aa).

NAD(+) contacts are provided by residues Gly86–Asp90, Thr110–Thr111, Lys123, and Lys132. Residues Glu165, His229, and His243 each coordinate Zn(2+).

It belongs to the sugar phosphate cyclases superfamily. Dehydroquinate synthase family. The cofactor is Co(2+). Zn(2+) is required as a cofactor. It depends on NAD(+) as a cofactor.

It localises to the cytoplasm. The catalysed reaction is 7-phospho-2-dehydro-3-deoxy-D-arabino-heptonate = 3-dehydroquinate + phosphate. The protein operates within metabolic intermediate biosynthesis; chorismate biosynthesis; chorismate from D-erythrose 4-phosphate and phosphoenolpyruvate: step 2/7. Functionally, catalyzes the conversion of 3-deoxy-D-arabino-heptulosonate 7-phosphate (DAHP) to dehydroquinate (DHQ). The polypeptide is 3-dehydroquinate synthase (Pyrobaculum neutrophilum (strain DSM 2338 / JCM 9278 / NBRC 100436 / V24Sta) (Thermoproteus neutrophilus)).